The primary structure comprises 179 residues: ATP synthase subunit b (179 aa).

The chain crosses the membrane as a helical span at residues 26–46; that stretch reads FLEANLFNLAILLGIIIYYAP.

The protein belongs to the ATPase B chain family. F-type ATPases have 2 components, F(1) - the catalytic core - and F(0) - the membrane proton channel. F(1) has five subunits: alpha(3), beta(3), gamma(1), delta(1), epsilon(1). F(0) has four main subunits: a(1), b(1), b'(1) and c(10-14). The alpha and beta chains form an alternating ring which encloses part of the gamma chain. F(1) is attached to F(0) by a central stalk formed by the gamma and epsilon chains, while a peripheral stalk is formed by the delta, b and b' chains.

The protein localises to the cellular thylakoid membrane. In terms of biological role, f(1)F(0) ATP synthase produces ATP from ADP in the presence of a proton or sodium gradient. F-type ATPases consist of two structural domains, F(1) containing the extramembraneous catalytic core and F(0) containing the membrane proton channel, linked together by a central stalk and a peripheral stalk. During catalysis, ATP synthesis in the catalytic domain of F(1) is coupled via a rotary mechanism of the central stalk subunits to proton translocation. Its function is as follows. Component of the F(0) channel, it forms part of the peripheral stalk, linking F(1) to F(0). This Synechocystis sp. (strain ATCC 27184 / PCC 6803 / Kazusa) protein is ATP synthase subunit b.